Reading from the N-terminus, the 312-residue chain is Gamma-soluble NSF attachment protein (312 aa).

The tract at residues 281 to 312 (KKKSPATPQAKPDGAAGMAAEEEEDEYSGGLC) is disordered. S284 is subject to Phosphoserine. At T287 the chain carries Phosphothreonine. Over residues 300-312 (AEEEEDEYSGGLC) the composition is skewed to acidic residues. S308 carries the phosphoserine modification.

The protein belongs to the SNAP family. As to quaternary structure, interacts with RAB11FIP5. Interacts with VTI1A. In terms of tissue distribution, abundantly expressed in the heart, liver and kidneys with lower expression in the brain, spleen, lung, muscle and testes.

Its subcellular location is the membrane. The protein resides in the golgi apparatus. Its function is as follows. Required for vesicular transport between the endoplasmic reticulum and the Golgi apparatus. The chain is Gamma-soluble NSF attachment protein from Mus musculus (Mouse).